Reading from the N-terminus, the 609-residue chain is Albumin (609 aa).

The signal sequence occupies residues 1-18; the sequence is MKWVTFISLLFLFSSAYS. Residues 19-24 constitute a propeptide that is removed on maturation; it reads RGVFRR. Albumin domains follow at residues 19 to 210, 211 to 403, and 404 to 601; these read RGVF…DELR, DEGK…EFKP, and LVEE…KLVA. Position 27 (His27) interacts with Cu cation. A Phosphoserine modification is found at Ser29. Ca(2+)-binding residues include Glu30 and Asp37. A disulfide bond links Cys77 and Cys86. Residues Ser82 and Ser89 each carry the phosphoserine modification. His91 contributes to the Zn(2+) binding site. 6 cysteine pairs are disulfide-bonded: Cys99–Cys115, Cys114–Cys125, Cys148–Cys193, Cys192–Cys201, Cys224–Cys270, and Cys269–Cys277. Thr107 carries the phosphothreonine modification. Lys229 carries the post-translational modification N6-succinyllysine. (4Z,15Z)-bilirubin IXalpha is bound at residue Lys264. Glu268 is a Ca(2+) binding site. Zn(2+)-binding residues include His271 and Asp273. Ca(2+)-binding residues include Asp273, Glu276, Asp279, and Asp283. 8 disulfides stabilise this stretch: Cys289–Cys303, Cys302–Cys313, Cys340–Cys385, Cys384–Cys393, Cys416–Cys462, Cys461–Cys472, Cys485–Cys501, and Cys500–Cys511. A Phosphoserine modification is found at Ser297. A Phosphoserine modification is found at Ser443. A phosphothreonine mark is found at Thr444 and Thr446. The residue at position 460 (Lys460) is an N6-succinyllysine. Ser513 is subject to Phosphoserine. 2 cysteine pairs are disulfide-bonded: Cys538-Cys583 and Cys582-Cys591. Position 543 is an N6-succinyllysine (Lys543). At Lys558 the chain carries N6-methyllysine. Thr570 bears the Phosphothreonine mark. An N6-succinyllysine modification is found at Lys588.

This sequence belongs to the ALB/AFP/VDB family. Interacts with FCGRT; this interaction regulates ALB homeostasis. Interacts with TASOR. In plasma, occurs in a covalently-linked complex with chromophore-bound alpha-1-microglobulin; this interaction does not prevent fatty acid binding to ALB. Phosphorylated by FAM20C in the extracellular medium. As to expression, plasma.

It localises to the secreted. Functionally, binds water, Ca(2+), Na(+), K(+), fatty acids, hormones, bilirubin and drugs. Its main function is the regulation of the colloidal osmotic pressure of blood. Major zinc transporter in plasma, typically binds about 80% of all plasma zinc. Major calcium and magnesium transporter in plasma, binds approximately 45% of circulating calcium and magnesium in plasma. Potentially has more than two calcium-binding sites and might additionally bind calcium in a non-specific manner. The shared binding site between zinc and calcium at residue Asp-273 suggests a crosstalk between zinc and calcium transport in the blood. The rank order of affinity is zinc &gt; calcium &gt; magnesium. Binds to the bacterial siderophore enterobactin and inhibits enterobactin-mediated iron uptake of E.coli from ferric transferrin, and may thereby limit the utilization of iron and growth of enteric bacteria such as E.coli. Does not prevent iron uptake by the bacterial siderophore aerobactin. This chain is Albumin (ALB), found in Pongo abelii (Sumatran orangutan).